Reading from the N-terminus, the 156-residue chain is Mediator of RNA polymerase II transcription subunit 28 (156 aa).

Residues M1–I38 are disordered. A coiled-coil region spans residues P104–V156.

This sequence belongs to the Mediator complex subunit 28 family. In terms of assembly, dimers. Component of the Mediator complex. Interacts with GEBPL.

It localises to the nucleus. Component of the Mediator complex, a coactivator involved in the regulated transcription of nearly all RNA polymerase II-dependent genes. Mediator functions as a bridge to convey information from gene-specific regulatory proteins to the basal RNA polymerase II transcription machinery. The Mediator complex, having a compact conformation in its free form, is recruited to promoters by direct interactions with regulatory proteins and serves for the assembly of a functional pre-initiation complex with RNA polymerase II and the general transcription factors. This is Mediator of RNA polymerase II transcription subunit 28 from Arabidopsis thaliana (Mouse-ear cress).